The following is a 145-amino-acid chain: 3-hydroxyacyl-[acyl-carrier-protein] dehydratase FabZ (145 aa).

His-49 is a catalytic residue.

It belongs to the thioester dehydratase family. FabZ subfamily.

It localises to the cytoplasm. It catalyses the reaction a (3R)-hydroxyacyl-[ACP] = a (2E)-enoyl-[ACP] + H2O. Its function is as follows. Involved in unsaturated fatty acids biosynthesis. Catalyzes the dehydration of short chain beta-hydroxyacyl-ACPs and long chain saturated and unsaturated beta-hydroxyacyl-ACPs. This is 3-hydroxyacyl-[acyl-carrier-protein] dehydratase FabZ from Rickettsia conorii (strain ATCC VR-613 / Malish 7).